The sequence spans 172 residues: Phosphopantetheine adenylyltransferase (172 aa).

Ser9 serves as a coordination point for substrate. ATP contacts are provided by residues 9–10 and His17; that span reads SF. Residues Lys41, Leu78, and Arg92 each contribute to the substrate site. ATP is bound by residues 93-95, Glu103, and 128-134; these read GLR and GRAITST.

Belongs to the bacterial CoaD family. Homohexamer. Mg(2+) is required as a cofactor.

It is found in the cytoplasm. It carries out the reaction (R)-4'-phosphopantetheine + ATP + H(+) = 3'-dephospho-CoA + diphosphate. Its pathway is cofactor biosynthesis; coenzyme A biosynthesis; CoA from (R)-pantothenate: step 4/5. Its function is as follows. Reversibly transfers an adenylyl group from ATP to 4'-phosphopantetheine, yielding dephospho-CoA (dPCoA) and pyrophosphate. The protein is Phosphopantetheine adenylyltransferase of Bartonella quintana (strain Toulouse) (Rochalimaea quintana).